We begin with the raw amino-acid sequence, 456 residues long: tRNA modification GTPase MnmE (456 aa).

Positions 25, 82, and 121 each coordinate (6S)-5-formyl-5,6,7,8-tetrahydrofolate. The TrmE-type G domain occupies 217-379 (GIKVVIIGKP…LLDEIVKIAG (163 aa)). Asn-227 is a K(+) binding site. Residues 227 to 232 (NAGKSS), 246 to 252 (TDIAGTT), and 271 to 274 (DTAG) contribute to the GTP site. Residue Ser-231 coordinates Mg(2+). K(+) contacts are provided by Thr-246, Ile-248, and Thr-251. Thr-252 is a Mg(2+) binding site. Residue Lys-456 coordinates (6S)-5-formyl-5,6,7,8-tetrahydrofolate.

Belongs to the TRAFAC class TrmE-Era-EngA-EngB-Septin-like GTPase superfamily. TrmE GTPase family. In terms of assembly, homodimer. Heterotetramer of two MnmE and two MnmG subunits. The cofactor is K(+).

The protein localises to the cytoplasm. In terms of biological role, exhibits a very high intrinsic GTPase hydrolysis rate. Involved in the addition of a carboxymethylaminomethyl (cmnm) group at the wobble position (U34) of certain tRNAs, forming tRNA-cmnm(5)s(2)U34. The polypeptide is tRNA modification GTPase MnmE (Endomicrobium trichonymphae).